The chain runs to 146 residues: Lysozyme-like protein 4 (146 aa).

Positions 1–19 (MKASVVLSLLGYLVVPSGA) are cleaved as a signal peptide. Residues 20-146 (YILGRCTVAK…LARWLDGCKL (127 aa)) form the C-type lysozyme domain. Disulfide bonds link Cys25/Cys144, Cys49/Cys131, Cys84/Cys96, and Cys92/Cys110. Residue Glu54 is part of the active site.

This sequence belongs to the glycosyl hydrolase 22 family. Monomer. Expressed in testis and epididymis.

It localises to the secreted. The protein localises to the cytoplasmic vesicle. The protein resides in the secretory vesicle. It is found in the acrosome. Its subcellular location is the cell projection. It localises to the cilium. The protein localises to the flagellum. Functionally, may be involved in fertilization. Has no detectable bacteriolytic and lysozyme activities in vitro. This chain is Lysozyme-like protein 4 (LYZL4), found in Homo sapiens (Human).